Reading from the N-terminus, the 92-residue chain is Small ribosomal subunit protein uS19 (92 aa).

It belongs to the universal ribosomal protein uS19 family.

Protein S19 forms a complex with S13 that binds strongly to the 16S ribosomal RNA. This chain is Small ribosomal subunit protein uS19, found in Cellvibrio japonicus (strain Ueda107) (Pseudomonas fluorescens subsp. cellulosa).